The primary structure comprises 243 residues: tRNA pseudouridine synthase A (243 aa).

The active-site Nucleophile is D53. Y111 is a binding site for substrate.

The protein belongs to the tRNA pseudouridine synthase TruA family. In terms of assembly, homodimer.

The catalysed reaction is uridine(38/39/40) in tRNA = pseudouridine(38/39/40) in tRNA. Functionally, formation of pseudouridine at positions 38, 39 and 40 in the anticodon stem and loop of transfer RNAs. This Chlorobium phaeovibrioides (strain DSM 265 / 1930) (Prosthecochloris vibrioformis (strain DSM 265)) protein is tRNA pseudouridine synthase A.